Here is a 289-residue protein sequence, read N- to C-terminus: Eukaryotic translation initiation factor 3 subunit F (289 aa).

Positions 7-137 (VKVHPVVLFQ…LRAYVCVPLG (131 aa)) constitute an MPN domain.

The protein belongs to the eIF-3 subunit F family. Component of the eukaryotic translation initiation factor 3 (eIF-3) complex.

Its subcellular location is the cytoplasm. Its function is as follows. Component of the eukaryotic translation initiation factor 3 (eIF-3) complex, which is involved in protein synthesis of a specialized repertoire of mRNAs and, together with other initiation factors, stimulates binding of mRNA and methionyl-tRNAi to the 40S ribosome. The eIF-3 complex specifically targets and initiates translation of a subset of mRNAs involved in cell proliferation. In Bombyx mori (Silk moth), this protein is Eukaryotic translation initiation factor 3 subunit F.